The following is a 436-amino-acid chain: Trigger factor (436 aa).

Residues 161–246 (GMRVTMDFIG…LIKVEEQILP (86 aa)) form the PPIase FKBP-type domain.

Belongs to the FKBP-type PPIase family. Tig subfamily.

It is found in the cytoplasm. The enzyme catalyses [protein]-peptidylproline (omega=180) = [protein]-peptidylproline (omega=0). Its function is as follows. Involved in protein export. Acts as a chaperone by maintaining the newly synthesized protein in an open conformation. Functions as a peptidyl-prolyl cis-trans isomerase. This Aeromonas salmonicida (strain A449) protein is Trigger factor.